An 84-amino-acid chain; its full sequence is Putative membrane protein insertion efficiency factor (84 aa).

The protein belongs to the UPF0161 family.

It is found in the cell inner membrane. Its function is as follows. Could be involved in insertion of integral membrane proteins into the membrane. This is Putative membrane protein insertion efficiency factor from Shewanella denitrificans (strain OS217 / ATCC BAA-1090 / DSM 15013).